The primary structure comprises 346 residues: Histone PARylation factor 1 (346 aa).

N-acetylmethionine is present on Met-1. The segment at 1 to 23 (MVGGGGKRRPGGEGPQCEKTTDV) is disordered. Position 19 is an N6-acetyllysine (Lys-19). Position 97 is an ADP-ribosylserine (Ser-97). N6-acetyllysine is present on residues Lys-186 and Lys-233. Asp-235 carries the polyADP-ribosyl aspartic acid modification. Tyr-238 carries the post-translational modification ADP-ribosyltyrosine. A PolyADP-ribosyl glutamic acid modification is found at Glu-240. Residues 242-346 (PETDADLKRI…SQENIDQLAA (105 aa)) are interaction with PARP1. The active-site Proton donor is the Glu-284.

Belongs to the HPF1 family. In terms of assembly, interacts with PARP1 (via the PARP catalytic domain). Interacts with PARP2 (via the PARP catalytic domain). Interacts with core nucleosomes in a PARP1- and PARP2-dependent manner.

The protein resides in the chromosome. It localises to the nucleus. Cofactor for serine ADP-ribosylation that confers serine specificity on PARP1 and PARP2 and plays a key role in DNA damage response. Initiates the repair of double-strand DNA breaks: recruited to DNA damage sites by PARP1 and PARP2 and switches the amino acid specificity of PARP1 and PARP2 from aspartate or glutamate to serine residues, licensing serine ADP-ribosylation of target proteins. Serine ADP-ribosylation of target proteins, such as histones, promotes decompaction of chromatin and the recruitment of repair factors leading to the reparation of DNA strand breaks. Serine ADP-ribosylation of proteins constitutes the primary form of ADP-ribosylation of proteins in response to DNA damage. HPF1 acts by completing the active site of PARP1 and PARP2: forms a composite active site composed of residues from HPF1 and PARP1 or PARP2. While HPF1 promotes the initiation of serine ADP-ribosylation, it restricts the polymerase activity of PARP1 and PARP2 in order to limit the length of poly-ADP-ribose chains. HPF1 also promotes tyrosine ADP-ribosylation, probably by conferring tyrosine specificity on PARP1. The polypeptide is Histone PARylation factor 1 (Homo sapiens (Human)).